A 133-amino-acid chain; its full sequence is Fatty acid-binding protein, heart (133 aa).

A2 is subject to N-acetylalanine. T8 is modified (phosphothreonine). A Phosphotyrosine; by Tyr-kinases modification is found at Y20. S23 is subject to Phosphoserine. Phosphothreonine is present on T30. Residue S83 is modified to Phosphoserine. Residue 127-129 (RTY) coordinates (9Z)-octadecenoate. Position 127-129 (127-129 (RTY)) interacts with hexadecanoate. Residue 127 to 129 (RTY) coordinates octadecanoate.

This sequence belongs to the calycin superfamily. Fatty-acid binding protein (FABP) family.

Its subcellular location is the cytoplasm. FABPs are thought to play a role in the intracellular transport of long-chain fatty acids and their acyl-CoA esters. This Mus musculus (Mouse) protein is Fatty acid-binding protein, heart (Fabp3).